The primary structure comprises 157 residues: UPF0262 protein RL0614 (157 aa).

It belongs to the UPF0262 family.

This Rhizobium johnstonii (strain DSM 114642 / LMG 32736 / 3841) (Rhizobium leguminosarum bv. viciae) protein is UPF0262 protein RL0614.